Consider the following 138-residue polypeptide: Large ribosomal subunit protein uL16 (138 aa).

The span at 1–19 shows a compositional bias: basic residues; it reads MLSPKRTKYRKAHKGRIHG. Positions 1–21 are disordered; the sequence is MLSPKRTKYRKAHKGRIHGNA.

This sequence belongs to the universal ribosomal protein uL16 family. In terms of assembly, part of the 50S ribosomal subunit.

Functionally, binds 23S rRNA and is also seen to make contacts with the A and possibly P site tRNAs. This is Large ribosomal subunit protein uL16 from Granulibacter bethesdensis (strain ATCC BAA-1260 / CGDNIH1).